Reading from the N-terminus, the 175-residue chain is Peptide deformylase 1 (175 aa).

Fe cation is bound by residues C99 and H141. E142 is a catalytic residue. Fe cation is bound at residue H145.

The protein belongs to the polypeptide deformylase family. Fe(2+) is required as a cofactor.

It carries out the reaction N-terminal N-formyl-L-methionyl-[peptide] + H2O = N-terminal L-methionyl-[peptide] + formate. Removes the formyl group from the N-terminal Met of newly synthesized proteins. Requires at least a dipeptide for an efficient rate of reaction. N-terminal L-methionine is a prerequisite for activity but the enzyme has broad specificity at other positions. The protein is Peptide deformylase 1 of Rickettsia conorii (strain ATCC VR-613 / Malish 7).